Reading from the N-terminus, the 298-residue chain is Aspartate carbamoyltransferase catalytic subunit (298 aa).

Carbamoyl phosphate contacts are provided by arginine 50 and threonine 51. L-aspartate is bound at residue lysine 79. Positions 100, 128, and 131 each coordinate carbamoyl phosphate. L-aspartate-binding residues include arginine 160 and arginine 221. Leucine 260 and proline 261 together coordinate carbamoyl phosphate.

Belongs to the aspartate/ornithine carbamoyltransferase superfamily. ATCase family. Heterooligomer of catalytic and regulatory chains.

The catalysed reaction is carbamoyl phosphate + L-aspartate = N-carbamoyl-L-aspartate + phosphate + H(+). It participates in pyrimidine metabolism; UMP biosynthesis via de novo pathway; (S)-dihydroorotate from bicarbonate: step 2/3. Catalyzes the condensation of carbamoyl phosphate and aspartate to form carbamoyl aspartate and inorganic phosphate, the committed step in the de novo pyrimidine nucleotide biosynthesis pathway. This is Aspartate carbamoyltransferase catalytic subunit from Methanosphaerula palustris (strain ATCC BAA-1556 / DSM 19958 / E1-9c).